Reading from the N-terminus, the 300-residue chain is Meiotically up-regulated gene 165 protein (300 aa).

2 disordered regions span residues 1–38 (MLEK…HKPS) and 50–109 (TNSS…STLE). The segment covering 21-38 (ESHTFSSQTDDSYFHKPS) has biased composition (polar residues). Low complexity predominate over residues 52 to 69 (SSVPSASRSPESIASSQS). Residues 94-103 (TLRKRGRKPK) show a composition bias toward basic residues.

Its subcellular location is the nucleus. In terms of biological role, has a role in meiosis. This Schizosaccharomyces pombe (strain 972 / ATCC 24843) (Fission yeast) protein is Meiotically up-regulated gene 165 protein (mug165).